The following is a 243-amino-acid chain: Outer membrane protein A (243 aa).

The next 5 beta stranded transmembrane spans lie at 1-8, 13-21, 47-56, 61-68, and 87-95; these read LTAKLGYP, LDIYTRLGG, PVFAGGLEWA, IATRLEYQ, and LLSVGVSYR. 4 tandem repeats follow at residues 107–108, 109–110, 111–112, and 113–114. The 4 X 2 AA tandem repeats of A-P stretch occupies residues 107–114; the sequence is APAPAPAP. Residues 116–243 form the OmpA-like domain; that stretch reads VQTKHFTLKS…RRVEIEVKGI (128 aa). Cys-217 and Cys-229 are joined by a disulfide.

The protein belongs to the outer membrane OOP (TC 1.B.6) superfamily. OmpA family. In terms of assembly, monomer and homodimer.

Its subcellular location is the cell outer membrane. Functionally, with TolR probably plays a role in maintaining the position of the peptidoglycan cell wall in the periplasm. Acts as a porin with low permeability that allows slow penetration of small solutes; an internal gate slows down solute passage. This Atlantibacter hermannii (Escherichia hermannii) protein is Outer membrane protein A.